A 1033-amino-acid polypeptide reads, in one-letter code: NACHT, LRR and PYD domains-containing protein 11 (1033 aa).

The 91-residue stretch at 1–91 (MAESDSTDFD…CRKIIGRRNR (91 aa)) folds into the Pyrin domain. Residues 147–470 (LNVFLMGERA…AFLMAVPNYL (324 aa)) form the NACHT domain. 153–160 (GERASGKT) contributes to the ATP binding site. LRR repeat units lie at residues 588–611 (CCHL…LIRP), 632–655 (MESL…ILSK), 745–768 (GGSL…ILCD), 802–827 (SPTL…TFPL), 859–882 (NEKL…LLCG), and 919–944 (LERL…LISP).

It belongs to the NLRP family.

Functionally, involved in inflammation. This Homo sapiens (Human) protein is NACHT, LRR and PYD domains-containing protein 11 (NLRP11).